The following is a 200-amino-acid chain: Dephospho-CoA kinase (200 aa).

The region spanning 4 to 200 (TIGLTGSVAT…TFIERFVNNK (197 aa)) is the DPCK domain. 12 to 17 (ATGKST) serves as a coordination point for ATP.

This sequence belongs to the CoaE family.

It is found in the cytoplasm. The enzyme catalyses 3'-dephospho-CoA + ATP = ADP + CoA + H(+). It participates in cofactor biosynthesis; coenzyme A biosynthesis; CoA from (R)-pantothenate: step 5/5. Functionally, catalyzes the phosphorylation of the 3'-hydroxyl group of dephosphocoenzyme A to form coenzyme A. The protein is Dephospho-CoA kinase of Listeria innocua serovar 6a (strain ATCC BAA-680 / CLIP 11262).